The chain runs to 295 residues: Ribosomal RNA small subunit methyltransferase A (295 aa).

Residues Asn-29, Leu-31, Gly-56, Glu-77, Asp-102, and Asn-128 each coordinate S-adenosyl-L-methionine.

Belongs to the class I-like SAM-binding methyltransferase superfamily. rRNA adenine N(6)-methyltransferase family. RsmA subfamily.

The protein localises to the cytoplasm. The enzyme catalyses adenosine(1518)/adenosine(1519) in 16S rRNA + 4 S-adenosyl-L-methionine = N(6)-dimethyladenosine(1518)/N(6)-dimethyladenosine(1519) in 16S rRNA + 4 S-adenosyl-L-homocysteine + 4 H(+). Functionally, specifically dimethylates two adjacent adenosines (A1518 and A1519) in the loop of a conserved hairpin near the 3'-end of 16S rRNA in the 30S particle. May play a critical role in biogenesis of 30S subunits. In Listeria monocytogenes serovar 1/2a (strain ATCC BAA-679 / EGD-e), this protein is Ribosomal RNA small subunit methyltransferase A.